A 648-amino-acid chain; its full sequence is Macrolide export ATP-binding/permease protein MacB (648 aa).

Residues 5-243 (LELKDIRRSY…AGGTEPVVNT (239 aa)) enclose the ABC transporter domain. An ATP-binding site is contributed by 41-48 (GASGSGKS). The next 4 membrane-spanning stretches (helical) occupy residues 273-293 (LLTMLGIIIGIASVVSIVVVG), 523-543 (LFMTLVAVISLVVGGIGVMNI), 576-596 (AVLVCLVGGALGITLSLLIAF), and 611-631 (PLALLLAFLCSTVTGILFGWL).

The protein belongs to the ABC transporter superfamily. Macrolide exporter (TC 3.A.1.122) family. Homodimer. Part of the tripartite efflux system MacAB-TolC, which is composed of an inner membrane transporter, MacB, a periplasmic membrane fusion protein, MacA, and an outer membrane component, TolC. The complex forms a large protein conduit and can translocate molecules across both the inner and outer membranes. Interacts with MacA.

It is found in the cell inner membrane. Part of the tripartite efflux system MacAB-TolC. MacB is a non-canonical ABC transporter that contains transmembrane domains (TMD), which form a pore in the inner membrane, and an ATP-binding domain (NBD), which is responsible for energy generation. Confers resistance against macrolides. This Escherichia coli O157:H7 protein is Macrolide export ATP-binding/permease protein MacB.